Here is a 526-residue protein sequence, read N- to C-terminus: MATQHFTNGSATDDGETALEHIIKSLETPTMKCEGTHFDSHVPHTFVIFGASGDLAKKKIYPTLWWLYRDNLLPKSTKFCGYARSKLTIEELRAKCHQYMKVQPDEQAKYEEFWQNHDYAAGSYDQRSDFVALKERLSSLESCNCSCNRIFYLALPPSVFERVTVNIKDICLAERGWNRVIIEKPFGRDDVTSKKLSDHLASLFHEDQLYRIDHYLGKEMVQNLMTIRFANKILNSTWNRENIASVLITFKEPFGTQGRGGYFDEFGIIRDVMQNHLLQILSLVAMEKPTSCQPDDIRDEKVKVLKSIPALTLDDMVLGQYVGNPNGVGEQREGYLDDPTVSNDSNTPTYAQGVLRINNERWDGVPFILRCGKALDERKAVVRIQYRDVPGDIFEGNSKRNELVIRVQPGEALYFKMMTKSPGITFDIEETELDLTYEHRYKNSYLPDAYERLILDVFCGSQMHFVRSDELSEAWRIFTPVLNEIENNKVKPIPYVFGSRGPKEADQKTSENNFKYYGSYKWIGKK.

Residues 50–57 (GASGDLAK), Arg-84, and Lys-184 each bind NADP(+). D-glucose 6-phosphate is bound by residues Lys-184, 214 to 218 (HYLGK), Glu-252, and Asp-271. The active-site Proton acceptor is His-276. NADP(+) is bound at residue Arg-370. Residues Lys-373 and Arg-378 each coordinate D-glucose 6-phosphate. Positions 379, 383, and 406 each coordinate NADP(+). Gln-408 is a binding site for D-glucose 6-phosphate. Residues 414–416 (YFK), 434–436 (DLT), Arg-500, Tyr-516, and Trp-522 each bind NADP(+).

The protein belongs to the glucose-6-phosphate dehydrogenase family.

It localises to the cytoplasm. It is found in the cytosol. The enzyme catalyses D-glucose 6-phosphate + NADP(+) = 6-phospho-D-glucono-1,5-lactone + NADPH + H(+). It participates in carbohydrate degradation; pentose phosphate pathway; D-ribulose 5-phosphate from D-glucose 6-phosphate (oxidative stage): step 1/3. Functionally, cytosolic glucose-6-phosphate dehydrogenase that catalyzes the first and rate-limiting step of the oxidative branch within the pentose phosphate pathway/shunt, an alternative route to glycolysis for the dissimilation of carbohydrates and a major source of reducing power and metabolic intermediates for fatty acid and nucleic acid biosynthetic processes. The protein is Glucose-6-phosphate 1-dehydrogenase (ZW) of Ceratitis capitata (Mediterranean fruit fly).